A 216-amino-acid polypeptide reads, in one-letter code: Ras-related protein RabN1 (216 aa).

15-22 (GDYNSGKT) lines the GTP pocket. Positions 37 to 44 (TCPSTFDL) match the Effector region motif. Residues 62–66 (DTAGQ) and 128–131 (TKSD) each bind GTP. Cys216 carries the S-geranylgeranyl cysteine lipid modification.

Belongs to the small GTPase superfamily. Rab family.

Its subcellular location is the cell membrane. The polypeptide is Ras-related protein RabN1 (rabN1) (Dictyostelium discoideum (Social amoeba)).